The primary structure comprises 96 residues: Co-chaperonin GroES (96 aa).

This sequence belongs to the GroES chaperonin family. As to quaternary structure, heptamer of 7 subunits arranged in a ring. Interacts with the chaperonin GroEL.

Its subcellular location is the cytoplasm. In terms of biological role, together with the chaperonin GroEL, plays an essential role in assisting protein folding. The GroEL-GroES system forms a nano-cage that allows encapsulation of the non-native substrate proteins and provides a physical environment optimized to promote and accelerate protein folding. GroES binds to the apical surface of the GroEL ring, thereby capping the opening of the GroEL channel. The protein is Co-chaperonin GroES of Herminiimonas arsenicoxydans.